The chain runs to 325 residues: Eukaryotic translation initiation factor 3 subunit I (325 aa).

WD repeat units lie at residues 8 to 47 (GHER…RLGT), 50 to 91 (GHTG…ALLK), 144 to 183 (CNDS…VLVN), and 186 to 225 (EHSR…HQKT). Phosphothreonine is present on Thr-219. An N6-acetyllysine modification is found at Lys-264. Lys-282 is covalently cross-linked (Glycyl lysine isopeptide (Lys-Gly) (interchain with G-Cter in ubiquitin)). A WD 5 repeat occupies 283–324 (GHFGLINSVAFHPDGKSYSSGGEDGYVRIHYFDPQYFEFEFE). Position 308 is a phosphotyrosine (Tyr-308).

It belongs to the eIF-3 subunit I family. Component of the eukaryotic translation initiation factor 3 (eIF-3) complex, which is composed of 13 subunits: EIF3A, EIF3B, EIF3C, EIF3D, EIF3E, EIF3F, EIF3G, EIF3H, EIF3I, EIF3J, EIF3K, EIF3L and EIF3M. The eIF-3 complex appears to include 3 stable modules: module A is composed of EIF3A, EIF3B, EIF3G and EIF3I; module B is composed of EIF3F, EIF3H, and EIF3M; and module C is composed of EIF3C, EIF3D, EIF3E, EIF3K and EIF3L. EIF3C of module C binds EIF3B of module A and EIF3H of module B, thereby linking the three modules. EIF3J is a labile subunit that binds to the eIF-3 complex via EIF3B. The eIF-3 complex interacts with RPS6KB1 under conditions of nutrient depletion. Mitogenic stimulation leads to binding and activation of a complex composed of MTOR and RPTOR, leading to phosphorylation and release of RPS6KB1 and binding of EIF4B to eIF-3. Post-translationally, phosphorylated by TGF-beta type II receptor.

The protein resides in the cytoplasm. In terms of biological role, component of the eukaryotic translation initiation factor 3 (eIF-3) complex, which is required for several steps in the initiation of protein synthesis. The eIF-3 complex associates with the 40S ribosome and facilitates the recruitment of eIF-1, eIF-1A, eIF-2:GTP:methionyl-tRNAi and eIF-5 to form the 43S pre-initiation complex (43S PIC). The eIF-3 complex stimulates mRNA recruitment to the 43S PIC and scanning of the mRNA for AUG recognition. The eIF-3 complex is also required for disassembly and recycling of post-termination ribosomal complexes and subsequently prevents premature joining of the 40S and 60S ribosomal subunits prior to initiation. The eIF-3 complex specifically targets and initiates translation of a subset of mRNAs involved in cell proliferation, including cell cycling, differentiation and apoptosis, and uses different modes of RNA stem-loop binding to exert either translational activation or repression. The protein is Eukaryotic translation initiation factor 3 subunit I of Pongo abelii (Sumatran orangutan).